A 154-amino-acid chain; its full sequence is Cytochrome c-type biogenesis protein CcmE (154 aa).

Residues 1–7 (MKPRQKR) are Cytoplasmic-facing. A helical; Signal-anchor for type II membrane protein transmembrane segment spans residues 8–28 (LVLIVGIVAAVGVAAALVLNA). Topologically, residues 29–154 (FQSNLVFFYS…GETVVKETRP (126 aa)) are periplasmic. 2 residues coordinate heme: H121 and Y125. The disordered stretch occupies residues 131–154 (AEALQRAGASNQKLGETVVKETRP).

This sequence belongs to the CcmE/CycJ family.

The protein resides in the cell inner membrane. Heme chaperone required for the biogenesis of c-type cytochromes. Transiently binds heme delivered by CcmC and transfers the heme to apo-cytochromes in a process facilitated by CcmF and CcmH. This Methylibium petroleiphilum (strain ATCC BAA-1232 / LMG 22953 / PM1) protein is Cytochrome c-type biogenesis protein CcmE.